A 418-amino-acid chain; its full sequence is Putative L-glutamine:3-amino-2,3-dideoxy-scyllo-inosose aminotransferase (418 aa).

An N6-(pyridoxal phosphate)lysine modification is found at K199.

It belongs to the DegT/DnrJ/EryC1 family. L-glutamine:2-deoxy-scyllo-inosose/scyllo-inosose aminotransferase subfamily. Pyridoxal 5'-phosphate serves as cofactor.

It catalyses the reaction 3-amino-2,3-dideoxy-scyllo-inosose + L-glutamine = 2-deoxystreptamine + 2-oxoglutaramate. It participates in metabolic intermediate biosynthesis; 2-deoxystreptamine biosynthesis; 2-deoxystreptamine from D-glucose 6-phosphate: step 4/4. It functions in the pathway antibiotic biosynthesis; gentamicin biosynthesis. Its function is as follows. Catalyzes the transamination of 3-amino-2,3-dideoxy-scyllo-inosose (amino-DOI) into 2-deoxystreptamine (DOS). In Micromonospora echinospora (Micromonospora purpurea), this protein is Putative L-glutamine:3-amino-2,3-dideoxy-scyllo-inosose aminotransferase (gtmD).